The primary structure comprises 98 residues: NADH-ubiquinone oxidoreductase chain 4L (98 aa).

The next 3 membrane-spanning stretches (helical) occupy residues 1-21 (MTPT…GMLT), 27-47 (VASL…ATLI), and 61-81 (IILL…LISI).

The protein belongs to the complex I subunit 4L family. As to quaternary structure, core subunit of respiratory chain NADH dehydrogenase (Complex I) which is composed of 45 different subunits.

Its subcellular location is the mitochondrion inner membrane. It carries out the reaction a ubiquinone + NADH + 5 H(+)(in) = a ubiquinol + NAD(+) + 4 H(+)(out). In terms of biological role, core subunit of the mitochondrial membrane respiratory chain NADH dehydrogenase (Complex I) which catalyzes electron transfer from NADH through the respiratory chain, using ubiquinone as an electron acceptor. Part of the enzyme membrane arm which is embedded in the lipid bilayer and involved in proton translocation. The sequence is that of NADH-ubiquinone oxidoreductase chain 4L (MT-ND4L) from Macaca fascicularis (Crab-eating macaque).